The following is a 1216-amino-acid chain: Tyrosine-protein kinase receptor ver-4 (1216 aa).

Residues 1–789 are Extracellular-facing; that stretch reads MRVSLTEFLV…VKVAGASSSS (789 aa). 16 N-linked (GlcNAc...) asparagine glycosylation sites follow: Asn-142, Asn-195, Asn-206, Asn-245, Asn-283, Asn-333, Asn-348, Asn-384, Asn-402, Asn-412, Asn-496, Asn-508, Asn-588, Asn-599, Asn-664, and Asn-703. Ig-like C2-type domains follow at residues 596 to 691 and 697 to 783; these read KSVN…TSIS and PPFL…VKVA. The cysteines at positions 619 and 675 are disulfide-linked. Cys-721 and Cys-765 form a disulfide bridge. Residues 790–810 traverse the membrane as a helical segment; sequence FFWLFITFFAFVVVGIVVSLL. Residues 811–1216 lie on the Cytoplasmic side of the membrane; that stretch reads WKLFGQKDLK…WVQKPTQLFF (406 aa). Residues 870–1181 enclose the Protein kinase domain; the sequence is LEILETLGSG…IKLFKNHIQY (312 aa). ATP-binding positions include 876 to 884 and Lys-908; that span reads LGSGQFGIV. The active-site Proton acceptor is Asp-1042.

This sequence belongs to the protein kinase superfamily. Tyr protein kinase family.

The protein localises to the cell membrane. It carries out the reaction L-tyrosyl-[protein] + ATP = O-phospho-L-tyrosyl-[protein] + ADP + H(+). Its function is as follows. Receptor tyrosine kinase which may be involved, downstream of pvf-1, in the positioning of ray 1, the most anterior ray sensillum in the male tail. The sequence is that of Tyrosine-protein kinase receptor ver-4 from Caenorhabditis elegans.